The following is a 92-amino-acid chain: Small ribosomal subunit protein uS19c (92 aa).

This sequence belongs to the universal ribosomal protein uS19 family.

The protein localises to the plastid. It localises to the chloroplast. Functionally, protein S19 forms a complex with S13 that binds strongly to the 16S ribosomal RNA. The sequence is that of Small ribosomal subunit protein uS19c from Thalassiosira pseudonana (Marine diatom).